The chain runs to 210 residues: Imidazole glycerol phosphate synthase subunit HisH (210 aa).

Residues 1 to 205 form the Glutamine amidotransferase type-1 domain; that stretch reads MIAVINYGAG…VELALSRGSG (205 aa). Cysteine 79 acts as the Nucleophile in catalysis. Residues histidine 180 and glutamate 182 contribute to the active site.

As to quaternary structure, heterodimer of HisH and HisF.

Its subcellular location is the cytoplasm. The enzyme catalyses 5-[(5-phospho-1-deoxy-D-ribulos-1-ylimino)methylamino]-1-(5-phospho-beta-D-ribosyl)imidazole-4-carboxamide + L-glutamine = D-erythro-1-(imidazol-4-yl)glycerol 3-phosphate + 5-amino-1-(5-phospho-beta-D-ribosyl)imidazole-4-carboxamide + L-glutamate + H(+). It carries out the reaction L-glutamine + H2O = L-glutamate + NH4(+). Its pathway is amino-acid biosynthesis; L-histidine biosynthesis; L-histidine from 5-phospho-alpha-D-ribose 1-diphosphate: step 5/9. Its function is as follows. IGPS catalyzes the conversion of PRFAR and glutamine to IGP, AICAR and glutamate. The HisH subunit catalyzes the hydrolysis of glutamine to glutamate and ammonia as part of the synthesis of IGP and AICAR. The resulting ammonia molecule is channeled to the active site of HisF. This Herpetosiphon aurantiacus (strain ATCC 23779 / DSM 785 / 114-95) protein is Imidazole glycerol phosphate synthase subunit HisH.